The primary structure comprises 248 residues: Phosphomannomutase (248 aa).

Asp12 serves as the catalytic Nucleophile. Asp12 and Asp14 together coordinate Mg(2+). The active-site Proton donor/acceptor is Asp14. Alpha-D-mannose 1-phosphate-binding residues include Arg21, Arg123, Arg134, Arg141, Ser179, and Asp181. Mg(2+) is bound by residues Asp207, Phe219, and Thr224.

This sequence belongs to the eukaryotic PMM family. As to quaternary structure, homodimer. Mg(2+) is required as a cofactor.

Its subcellular location is the cytoplasm. It carries out the reaction alpha-D-mannose 1-phosphate = D-mannose 6-phosphate. It functions in the pathway nucleotide-sugar biosynthesis; GDP-alpha-D-mannose biosynthesis; alpha-D-mannose 1-phosphate from D-fructose 6-phosphate: step 2/2. In terms of biological role, catalyzes the interconversion of mannose-6-phosphate to mannose-1-phosphate, the precursor for the synthesis of GDP-mannose. GDP-mannose is an essential sugar nucleotide for the synthesis of D-mannose-containing cell wall polysaccharides (galactomannans and glucomannans), glycolipids, glycoproteins and the antioxidant L-ascorbate. The sequence is that of Phosphomannomutase from Spinacia oleracea (Spinach).